Reading from the N-terminus, the 863-residue chain is Neuroligin-1 (863 aa).

Residues 1 to 45 (MALPRCTWPNYVWRAVMACLVHRGLGAPLTLCMLGCLLQAGHVLS) form the signal peptide. Residues 46-717 (QKLDDVDPLV…DQRDYSTELS (672 aa)) are Extracellular-facing. An N-linked (GlcNAc...) (complex) asparagine glycan is attached at asparagine 109. Cysteine 117 and cysteine 153 are joined by a disulfide. Residues 183–212 (KGGPLTKKQTDDLGDNDGAEDEDIRDSGGP) are disordered. The segment covering 194–206 (DLGDNDGAEDEDI) has biased composition (acidic residues). Residues asparagine 323 and asparagine 363 are each glycosylated (N-linked (GlcNAc...) (complex) asparagine). Disulfide bonds link cysteine 362/cysteine 373 and cysteine 532/cysteine 566. N-linked (GlcNAc...) asparagine glycosylation is present at asparagine 567. The segment at 670 to 708 (PSTDITFRPTRKNSVPVTSAFPTAKQDDPKQQPSPFSVD) is disordered. The segment covering 681-690 (KNSVPVTSAF) has biased composition (polar residues). Serine 703 and serine 706 each carry an O-linked (GalNAc...) serine glycan. The chain crosses the membrane as a helical span at residues 718–738 (VTIAVGASLLFLNILAFAALY). The Cytoplasmic segment spans residues 739 to 863 (YKKDKRRHDV…HPHSHSTTRV (125 aa)). The disordered stretch occupies residues 842–863 (GGQNNTLPHPHPHPHSHSTTRV). A compositionally biased stretch (basic residues) spans 851 to 863 (PHPHPHSHSTTRV).

The protein belongs to the type-B carboxylesterase/lipase family. As to quaternary structure, interacts with neurexins NRXN1, NRXN2 and NRXN3. Interaction with neurexins is mediated by heparan sulfate glycan modification on neurexin. Interacts with NLGN3. Interacts with AIP1 and PDZRN3. Interacts (via its C-terminus) with DLG4/PSD-95 (via PDZ domain 3). Interacts with GOPC. Expressed in the blood vessel walls (at protein level). Highly expressed in brain through prenatal stages, and at lower levels in pancreas islet beta cells.

It is found in the cell membrane. Its subcellular location is the postsynaptic density. The protein localises to the synaptic cleft. It localises to the synaptic cell membrane. In terms of biological role, cell surface protein involved in cell-cell-interactions via its interactions with neurexin family members. Plays a role in synapse function and synaptic signal transmission, and probably mediates its effects by recruiting and clustering other synaptic proteins. May promote the initial formation of synapses, but is not essential for this. In vitro, triggers the de novo formation of presynaptic structures. May be involved in specification of excitatory synapses. Required to maintain wakefulness quality and normal synchrony of cerebral cortex activity during wakefulness and sleep. The protein is involved in nervous system development. The polypeptide is Neuroligin-1 (NLGN1) (Homo sapiens (Human)).